A 494-amino-acid polypeptide reads, in one-letter code: Glycerol kinase (494 aa).

T12 is a binding site for ADP. 3 residues coordinate ATP: T12, T13, and S14. T12 contributes to the sn-glycerol 3-phosphate binding site. R16 provides a ligand contact to ADP. The sn-glycerol 3-phosphate site is built by R82, E83, Y134, and D244. The glycerol site is built by R82, E83, Y134, D244, and Q245. Residues T266 and G309 each contribute to the ADP site. Residues T266, G309, Q313, and G410 each coordinate ATP. Residues G410 and N414 each coordinate ADP.

It belongs to the FGGY kinase family. Homotetramer and homodimer (in equilibrium).

The catalysed reaction is glycerol + ATP = sn-glycerol 3-phosphate + ADP + H(+). Its pathway is polyol metabolism; glycerol degradation via glycerol kinase pathway; sn-glycerol 3-phosphate from glycerol: step 1/1. With respect to regulation, activated by phosphorylation and inhibited by fructose 1,6-bisphosphate (FBP). In terms of biological role, key enzyme in the regulation of glycerol uptake and metabolism. Catalyzes the phosphorylation of glycerol to yield sn-glycerol 3-phosphate. The chain is Glycerol kinase from Desulfitobacterium hafniense (strain DSM 10664 / DCB-2).